A 1710-amino-acid polypeptide reads, in one-letter code: Latrophilin Cirl (1710 aa).

Topologically, residues 1–767 (MLPTILSISY…LFTMFDGNMR (767 aa)) are extracellular. The 90-residue stretch at 25-114 (ACEGKKLTIE…KYLEAHYQCI (90 aa)) folds into the SUEL-type lectin domain. A glycan (N-linked (GlcNAc...) asparagine) is linked at asparagine 142. Residues 183 to 304 (QHTAVTHSTP…SGSVVPGNGS (122 aa)) are disordered. 2 stretches are compositionally biased toward polar residues: residues 185–198 (TAVTHSTPSSSTTA) and 256–265 (NATSPSNTRI). Asparagine 256 carries an N-linked (GlcNAc...) asparagine glycan. Composition is skewed to low complexity over residues 275–285 (DDGTLLTTKSS) and 295–304 (SGSVVPGNGS). Asparagine 302 and asparagine 341 each carry an N-linked (GlcNAc...) asparagine glycan. The segment at 376 to 400 (YDEYDDDPSSTTPATSSADCLHNSS) is disordered. Residues 384–394 (SSTTPATSSAD) show a composition bias toward low complexity. N-linked (GlcNAc...) asparagine glycosylation is found at asparagine 398, asparagine 655, asparagine 703, and asparagine 730. One can recognise a GAIN-B domain in the interval 561–754 (RSVVQKVKNI…AILMDVVDEH (194 aa)). Cystine bridges form between cysteine 709-cysteine 736 and cysteine 724-cysteine 738. The segment at 709–754 (CVFWNYIDHAWSANGCSLESTNRTHSVCSCNHLTNFAILMDVVDEH) is GPS. A helical transmembrane segment spans residues 768–788 (IFIYISIGICVVFIVIALLTL). Over 789-801 (KLFNGVFVKSART) the chain is Cytoplasmic. Residues 802–822 (SIYTSIYLCLLAIELLFLLGI) traverse the membrane as a helical segment. Over 823-828 (EQTETS) the chain is Extracellular. A helical transmembrane segment spans residues 829-849 (IFCGFITIFLHCAILSGTAWF). Topologically, residues 850–875 (CYEAFHSYSTLTSDELLLEVDQTPKV) are cytoplasmic. A helical transmembrane segment spans residues 876-896 (NCYYLLSYGLSLSVVAISLVI). Residues 897-920 (DPSTYTQNDYCVLMEANALFYATF) are Extracellular-facing. A helical membrane pass occupies residues 921-941 (VMPVLVFFVAAIGYTFLSWII). Residues 942 to 968 (MCRKSRTGLKTKEHTRLASVRFDIRCS) lie on the Cytoplasmic side of the membrane. The chain crosses the membrane as a helical span at residues 969 to 989 (FVFLLLLSAVWCSAYFYLRGA). Topologically, residues 990-999 (KMDDDTADVY) are extracellular. Residues 1000–1020 (GYCFICFNTLLGLYIFVFHCI) traverse the membrane as a helical segment. Residues 1021–1710 (QNEKIRREYR…VRCYLEPLAK (690 aa)) are Cytoplasmic-facing. Residues serine 1156, serine 1253, serine 1260, serine 1329, and serine 1330 each carry the phosphoserine modification. Positions 1234 to 1259 (KPNSGQHGKKKRGAGGVPASPSGSLH) are disordered. Disordered regions lie at residues 1452-1540 (GGGS…SDER) and 1568-1690 (DYGA…QQRH). Residues 1458 to 1483 (GGSVSSRSQQQQLKKQQQQQSLAQQR) are compositionally biased toward low complexity. Composition is skewed to acidic residues over residues 1491 to 1505 (DDDDDEDEEEDEEAT) and 1515 to 1528 (CDEDEEEDESDLED). Residues 1638–1650 (QTPAQKRQQLQKL) show a composition bias toward polar residues. Over residues 1651 to 1672 (SPQSTTSSSSHTSHSNPNPHPH) the composition is skewed to low complexity. A compositionally biased stretch (basic residues) spans 1673 to 1689 (QLTHPHPHQHPPHHQQR).

The protein belongs to the G-protein coupled receptor 2 family. LN-TM7 subfamily. In terms of assembly, forms a heterodimer, consisting of a large extracellular region non-covalently linked to a seven-transmembrane moiety. Proteolytically cleaved into 2 subunits, an extracellular subunit and a seven-transmembrane subunit.

It localises to the cell membrane. This Drosophila erecta (Fruit fly) protein is Latrophilin Cirl.